The sequence spans 100 residues: Proline-rich protein 15-like protein (100 aa).

Residues 26-100 are disordered; that stretch reads PDTYTQSEGG…LFDDREGKGQ (75 aa). Positions 53-62 are enriched in basic and acidic residues; that stretch reads RLEKIVDKNT.

It belongs to the PRR15 family.

The chain is Proline-rich protein 15-like protein (PRR15L) from Bos taurus (Bovine).